We begin with the raw amino-acid sequence, 351 residues long: Putative phospho-N-acetylmuramoyl-pentapeptide-transferase (351 aa).

10 helical membrane passes run 2-22 (MEFL…TLFI), 44-64 (AGTP…VTVL), 71-91 (LVLT…DDLL), 158-178 (GEKI…GAVG), 181-201 (GGFY…VGAI), 212-232 (GMAA…LGLS), 235-255 (ALPF…NRHP), 258-278 (IFMG…AVML), 281-301 (TVYF…VSLL), and 328-348 (IVLL…YMTG).

The protein belongs to the glycosyltransferase 4 family. MraY subfamily. Mg(2+) is required as a cofactor.

It localises to the cell membrane. The catalysed reaction is UDP-N-acetyl-alpha-D-muramoyl-L-alanyl-gamma-D-glutamyl-meso-2,6-diaminopimeloyl-D-alanyl-D-alanine + di-trans,octa-cis-undecaprenyl phosphate = di-trans,octa-cis-undecaprenyl diphospho-N-acetyl-alpha-D-muramoyl-L-alanyl-D-glutamyl-meso-2,6-diaminopimeloyl-D-alanyl-D-alanine + UMP. This is Putative phospho-N-acetylmuramoyl-pentapeptide-transferase from Methanothermobacter thermautotrophicus (strain ATCC 29096 / DSM 1053 / JCM 10044 / NBRC 100330 / Delta H) (Methanobacterium thermoautotrophicum).